Consider the following 135-residue polypeptide: Small ribosomal subunit protein uS11 (135 aa).

It belongs to the universal ribosomal protein uS11 family. Part of the 30S ribosomal subunit. Interacts with proteins S7 and S18. Binds to IF-3.

Its function is as follows. Located on the platform of the 30S subunit, it bridges several disparate RNA helices of the 16S rRNA. Forms part of the Shine-Dalgarno cleft in the 70S ribosome. This is Small ribosomal subunit protein uS11 from Polynucleobacter asymbioticus (strain DSM 18221 / CIP 109841 / QLW-P1DMWA-1) (Polynucleobacter necessarius subsp. asymbioticus).